Here is a 343-residue protein sequence, read N- to C-terminus: Methylthioribose-1-phosphate isomerase (343 aa).

Residues arginine 44–alanine 46, arginine 85, and glutamine 192 each bind substrate. Aspartate 233 acts as the Proton donor in catalysis. Position 243–244 (asparagine 243–lysine 244) interacts with substrate.

Belongs to the eIF-2B alpha/beta/delta subunits family. MtnA subfamily.

The catalysed reaction is 5-(methylsulfanyl)-alpha-D-ribose 1-phosphate = 5-(methylsulfanyl)-D-ribulose 1-phosphate. It functions in the pathway amino-acid biosynthesis; L-methionine biosynthesis via salvage pathway; L-methionine from S-methyl-5-thio-alpha-D-ribose 1-phosphate: step 1/6. Catalyzes the interconversion of methylthioribose-1-phosphate (MTR-1-P) into methylthioribulose-1-phosphate (MTRu-1-P). The sequence is that of Methylthioribose-1-phosphate isomerase from Carboxydothermus hydrogenoformans (strain ATCC BAA-161 / DSM 6008 / Z-2901).